A 215-amino-acid polypeptide reads, in one-letter code: Probable transaldolase (215 aa).

Catalysis depends on K83, which acts as the Schiff-base intermediate with substrate.

Belongs to the transaldolase family. Type 3B subfamily.

It is found in the cytoplasm. The enzyme catalyses D-sedoheptulose 7-phosphate + D-glyceraldehyde 3-phosphate = D-erythrose 4-phosphate + beta-D-fructose 6-phosphate. It participates in carbohydrate degradation; pentose phosphate pathway; D-glyceraldehyde 3-phosphate and beta-D-fructose 6-phosphate from D-ribose 5-phosphate and D-xylulose 5-phosphate (non-oxidative stage): step 2/3. Transaldolase is important for the balance of metabolites in the pentose-phosphate pathway. This Clostridium perfringens (strain ATCC 13124 / DSM 756 / JCM 1290 / NCIMB 6125 / NCTC 8237 / Type A) protein is Probable transaldolase.